Reading from the N-terminus, the 602-residue chain is Alpha-glucosides permease MPH3 (602 aa).

At 1–106 (MKNLSFLINR…AAAWSLLVST (106 aa)) the chain is on the cytoplasmic side. A helical transmembrane segment spans residues 107–127 (TLIMEGYDTAILGAFYALPIF). Residues 128 to 142 (QRKFGSQNDKTGEWE) lie on the Extracellular side of the membrane. A helical membrane pass occupies residues 143-163 (ISASWQIGLTLCYMAGEIVGL). The Cytoplasmic segment spans residues 164–178 (QLTGPSVDLVGNRYT). The helical transmembrane segment at 179 to 199 (LIIALFFLAAFTFILYFCNSL) threads the bilayer. Residue Gly200 is a topological domain, extracellular. Residues 201-221 (MIAVGQALCGMPWGCFQCLTV) form a helical membrane-spanning segment. Residues 222-234 (SYASEICPLALRY) lie on the Cytoplasmic side of the membrane. Residues 235 to 255 (YLTTYSNLCWLFGQLFAAGIM) traverse the membrane as a helical segment. At 256 to 270 (KNSQKKYADSELGYK) the chain is on the extracellular side. A helical membrane pass occupies residues 271–291 (LPFALQWILPVPLALGIFFAP). The Cytoplasmic segment spans residues 292-363 (ESPWWLVKKG…EDKINRRRTR (72 aa)). The helical transmembrane segment at 364-384 (ITCLCWAGQATCGSILIGYST) threads the bilayer. At 385–397 (YFYEKAGVSTEMS) the chain is on the extracellular side. A helical transmembrane segment spans residues 398-418 (FTFSIIQYCLGICATFLSWWA). The Cytoplasmic portion of the chain corresponds to 419–426 (SKYFGRYD). A helical transmembrane segment spans residues 427–447 (LYAFGLAFQTIVFFIIGGLGC). At 448–459 (SSTHGSKMGSGS) the chain is on the extracellular side. A helical membrane pass occupies residues 460 to 480 (LLMAVAFFYNLGIAPVVFCLV). At 481 to 492 (SEMPSSRLRTKT) the chain is on the cytoplasmic side. The chain crosses the membrane as a helical span at residues 493–513 (IILARNTYNVVSIICSVLILY). At 514–525 (QLNSKKWNWGAK) the chain is on the extracellular side. Residues 526–546 (SGFFWGVLCFCTLIWAVVDLP) traverse the membrane as a helical segment. At 547-602 (ETAGKTFVEINELFKLGVSARKFKSTKVDPFVVKNTPKYVSHNDPKGDIEASIAEE) the chain is on the cytoplasmic side.

This sequence belongs to the major facilitator superfamily. Sugar transporter (TC 2.A.1.1) family.

It is found in the cell membrane. Functionally, high-affinity uptake of maltose and maltotriose. Also transports alpha-methylglucoside, glucose and turanose but not melezitose or trehalose. The protein is Alpha-glucosides permease MPH3 (MPH3) of Saccharomyces cerevisiae (strain YJM789) (Baker's yeast).